The primary structure comprises 313 residues: Ribosomal RNA small subunit methyltransferase H (313 aa).

S-adenosyl-L-methionine is bound by residues 35-37, D55, F80, D102, and Q109; that span reads GGH.

Belongs to the methyltransferase superfamily. RsmH family.

It localises to the cytoplasm. It catalyses the reaction cytidine(1402) in 16S rRNA + S-adenosyl-L-methionine = N(4)-methylcytidine(1402) in 16S rRNA + S-adenosyl-L-homocysteine + H(+). Specifically methylates the N4 position of cytidine in position 1402 (C1402) of 16S rRNA. The sequence is that of Ribosomal RNA small subunit methyltransferase H from Shewanella frigidimarina (strain NCIMB 400).